Consider the following 141-residue polypeptide: Auxin-responsive protein SAUR64 (141 aa).

It belongs to the ARG7 family.

The protein resides in the cell membrane. In terms of biological role, may promote auxin-stimulated organ elongation, such as hypocotyls, stamen filaments and petals. This is Auxin-responsive protein SAUR64 from Arabidopsis thaliana (Mouse-ear cress).